Reading from the N-terminus, the 110-residue chain is Vacuolar ATPase assembly integral membrane protein VMA21 (110 aa).

The interval 1–28 (MTTRRIIGQDGEEKTYLDVDPRGPPGPS) is disordered. Topologically, residues 1 to 44 (MTTRRIIGQDGEEKTYLDVDPRGPPGPSNISPAVPASVIWKLMS) are cytoplasmic. Residues 11–21 (GEEKTYLDVDP) show a composition bias toward basic and acidic residues. Residues 45–65 (FTFAMITLPIGTYFFTVNYVF) traverse the membrane as a helical segment. At 66 to 71 (GGNATY) the chain is on the lumenal side. A helical transmembrane segment spans residues 72–92 (AGALAAIMANVVLIAYVIMAF). Residues 93–110 (KDDQAEQAEDAREAKKEL) lie on the Cytoplasmic side of the membrane. Residues 107–110 (KKEL) carry the Prevents secretion from ER motif.

The protein belongs to the VMA21 family.

The protein resides in the endoplasmic reticulum membrane. Its subcellular location is the endoplasmic reticulum-Golgi intermediate compartment membrane. It is found in the cytoplasmic vesicle. The protein localises to the COPII-coated vesicle membrane. Its function is as follows. Required for the assembly of the V0 complex of the vacuolar ATPase (V-ATPase) in the endoplasmic reticulum. This Phaeosphaeria nodorum (strain SN15 / ATCC MYA-4574 / FGSC 10173) (Glume blotch fungus) protein is Vacuolar ATPase assembly integral membrane protein VMA21.